The following is a 1070-amino-acid chain: Isoleucine--tRNA ligase (1070 aa).

A 'HIGH' region motif is present at residues Pro-50–Thr-60. A 'KMSKS' region motif is present at residues Gly-606–Ser-610. Lys-609 is a binding site for ATP.

This sequence belongs to the class-I aminoacyl-tRNA synthetase family. IleS type 2 subfamily. Monomer. The cofactor is Zn(2+).

The protein resides in the cytoplasm. It carries out the reaction tRNA(Ile) + L-isoleucine + ATP = L-isoleucyl-tRNA(Ile) + AMP + diphosphate. Catalyzes the attachment of isoleucine to tRNA(Ile). As IleRS can inadvertently accommodate and process structurally similar amino acids such as valine, to avoid such errors it has two additional distinct tRNA(Ile)-dependent editing activities. One activity is designated as 'pretransfer' editing and involves the hydrolysis of activated Val-AMP. The other activity is designated 'posttransfer' editing and involves deacylation of mischarged Val-tRNA(Ile). In Halobacterium salinarum (strain ATCC 700922 / JCM 11081 / NRC-1) (Halobacterium halobium), this protein is Isoleucine--tRNA ligase.